A 284-amino-acid polypeptide reads, in one-letter code: Acetyl-coenzyme A carboxylase carboxyl transferase subunit beta (284 aa).

A CoA carboxyltransferase N-terminal domain is found at 24-284 (GLWYKSPTGK…LDLILNNEVR (261 aa)).

The protein belongs to the AccD/PCCB family. As to quaternary structure, acetyl-CoA carboxylase is a heterohexamer composed of biotin carboxyl carrier protein (AccB), biotin carboxylase (AccC) and two subunits each of ACCase subunit alpha (AccA) and ACCase subunit beta (AccD).

The protein resides in the cytoplasm. The enzyme catalyses N(6)-carboxybiotinyl-L-lysyl-[protein] + acetyl-CoA = N(6)-biotinyl-L-lysyl-[protein] + malonyl-CoA. It participates in lipid metabolism; malonyl-CoA biosynthesis; malonyl-CoA from acetyl-CoA: step 1/1. Component of the acetyl coenzyme A carboxylase (ACC) complex. Biotin carboxylase (BC) catalyzes the carboxylation of biotin on its carrier protein (BCCP) and then the CO(2) group is transferred by the transcarboxylase to acetyl-CoA to form malonyl-CoA. The protein is Acetyl-coenzyme A carboxylase carboxyl transferase subunit beta of Flavobacterium psychrophilum (strain ATCC 49511 / DSM 21280 / CIP 103535 / JIP02/86).